The chain runs to 292 residues: Probable serine/threonine-protein kinase FPV226 (292 aa).

The Protein kinase domain maps to 14-292 (WKIDKLIGCG…DLLRQLVNSL (279 aa)). Residues 20-28 (IGCGGFGCV) and lysine 43 contribute to the ATP site. The active-site Proton acceptor is the aspartate 147.

The protein belongs to the protein kinase superfamily. Ser/Thr protein kinase family. Poxviruses subfamily.

It catalyses the reaction L-seryl-[protein] + ATP = O-phospho-L-seryl-[protein] + ADP + H(+). The catalysed reaction is L-threonyl-[protein] + ATP = O-phospho-L-threonyl-[protein] + ADP + H(+). This chain is Probable serine/threonine-protein kinase FPV226, found in Vertebrata (FPV).